A 284-amino-acid polypeptide reads, in one-letter code: 4-hydroxybenzoate octaprenyltransferase (284 aa).

8 helical membrane passes run 16 to 36 (PIGILLLLWPTLWALWMASDG), 40 to 60 (WTLVAIFTLGTVLMRSAGCAV), 91 to 111 (LLVALVLTLLAFALIWPLNTL), 132 to 152 (FFAIPQAYLGIAFGFGIPMGF), 157 to 177 (NTVPAAAWWLLVANVFWSVAY), 207 to 227 (AIIMFCYAMTLGIIGIVGWQF), 231 to 251 (IWFVAGLLLAAVCAAYHYTLI), and 259 to 279 (CFAAFNHNNWLGGAIFGGVAL).

Belongs to the UbiA prenyltransferase family. Mg(2+) serves as cofactor.

Its subcellular location is the cell inner membrane. The enzyme catalyses all-trans-octaprenyl diphosphate + 4-hydroxybenzoate = 4-hydroxy-3-(all-trans-octaprenyl)benzoate + diphosphate. It participates in cofactor biosynthesis; ubiquinone biosynthesis. Its function is as follows. Catalyzes the prenylation of para-hydroxybenzoate (PHB) with an all-trans polyprenyl group. Mediates the second step in the final reaction sequence of ubiquinone-8 (UQ-8) biosynthesis, which is the condensation of the polyisoprenoid side chain with PHB, generating the first membrane-bound Q intermediate 3-octaprenyl-4-hydroxybenzoate. The chain is 4-hydroxybenzoate octaprenyltransferase from Janthinobacterium sp. (strain Marseille) (Minibacterium massiliensis).